The following is a 395-amino-acid chain: Flap endonuclease 1 (395 aa).

The segment at 1-108 (MGILGLSKLL…DELETRRQKA (108 aa)) is N-domain. Asp34 contributes to the Mg(2+) binding site. A DNA-binding site is contributed by Arg74. Residues Asp90, Glu162, Glu164, Asp183, and Asp185 each contribute to the Mg(2+) site. Residues 126–257 (MMEKMSKRTV…QRAWEGIQRY (132 aa)) are I-domain. DNA is bound at residue Glu162. DNA contacts are provided by Gly235 and Asp237. Asp237 is a Mg(2+) binding site. The interaction with PCNA stretch occupies residues 340 to 348 (TQGRLDNFF).

This sequence belongs to the XPG/RAD2 endonuclease family. FEN1 subfamily. As to quaternary structure, interacts with PCNA. Three molecules of FEN1 bind to one PCNA trimer with each molecule binding to one PCNA monomer. PCNA stimulates the nuclease activity without altering cleavage specificity. Mg(2+) serves as cofactor. Post-translationally, phosphorylated. Phosphorylation upon DNA damage induces relocalization to the nuclear plasma.

It is found in the nucleus. The protein localises to the nucleolus. Its subcellular location is the nucleoplasm. It localises to the mitochondrion. Structure-specific nuclease with 5'-flap endonuclease and 5'-3' exonuclease activities involved in DNA replication and repair. During DNA replication, cleaves the 5'-overhanging flap structure that is generated by displacement synthesis when DNA polymerase encounters the 5'-end of a downstream Okazaki fragment. It enters the flap from the 5'-end and then tracks to cleave the flap base, leaving a nick for ligation. Also involved in the long patch base excision repair (LP-BER) pathway, by cleaving within the apurinic/apyrimidinic (AP) site-terminated flap. Acts as a genome stabilization factor that prevents flaps from equilibrating into structures that lead to duplications and deletions. Also possesses 5'-3' exonuclease activity on nicked or gapped double-stranded DNA, and exhibits RNase H activity. Also involved in replication and repair of rDNA and in repairing mitochondrial DNA. The polypeptide is Flap endonuclease 1 (Leishmania braziliensis).